The primary structure comprises 1012 residues: Vacuolar membrane protease (1012 aa).

Over 1–60 (MRRSTDPRNLLVRRGPLLVDGESAISELDPGFFPTGDAPKMSSTTRRRFNLIAFTPGPVT) the chain is Cytoplasmic. The chain crosses the membrane as a helical span at residues 61–81 (VISSLVYLALLIPLLLVHTIV). The Vacuolar portion of the chain corresponds to 82-432 (PSAPKSNPKG…SFAVFRLHTL (351 aa)). N-linked (GlcNAc...) asparagine glycosylation occurs at asparagine 159. The Zn(2+) site is built by histidine 215 and aspartate 227. Glutamate 261 acts as the Proton acceptor in catalysis. Zn(2+) is bound by residues glutamate 262, glutamate 287, and histidine 360. The chain crosses the membrane as a helical span at residues 433-453 (FAISVTLLVVCPIVLFVIGII). Residues 454-487 (LSKMDKMYLFSIHETIPETKEKVSVRGLRGLFRY) lie on the Cytoplasmic side of the membrane. The chain crosses the membrane as a helical span at residues 488–508 (PIILVVSSGILIGLSYLLAKV). The Vacuolar portion of the chain corresponds to 509–518 (NPFIVHSSSY). The chain crosses the membrane as a helical span at residues 519–539 (AVWSMMLSSWIFMTWFLSCIA). The Cytoplasmic segment spans residues 540–550 (DFFRPSALHRA). A helical transmembrane segment spans residues 551–571 (YTFTWQLLVMWVLLVISTVYV). Residues 572 to 575 (NQHD) are Vacuolar-facing. Residues 576-596 (IAAGYFIVFYFAGTFLATLIS) form a helical membrane-spanning segment. Residues 597-710 (YLELFALPNK…WSASLPTWTW (114 aa)) lie on the Cytoplasmic side of the membrane. The segment covering 614-629 (SQYPSRLGSNRSSRIL) has biased composition (polar residues). The disordered stretch occupies residues 614–660 (SQYPSRLGSNRSSRILSPSADELPTGGDNNGEIYDGEEEPTESSSLL). A helical membrane pass occupies residues 711 to 731 (VLQFLFVGPVVIMFIGQLGLF). At 732 to 743 (LTSAMNQVGADG) the chain is on the vacuolar side. The chain crosses the membrane as a helical span at residues 744-764 (VGLLVVYIAIAVFSVLLLIPL). At 765–777 (SPFIHRFTYHVPT) the chain is on the cytoplasmic side. Residues 778–798 (FLLLVFIATLIYNLAAFPFSA) traverse the membrane as a helical segment. Topologically, residues 799 to 1012 (ENRLKIFFVQ…DGLVEVSRGF (214 aa)) are vacuolar. N-linked (GlcNAc...) asparagine glycans are attached at residues asparagine 842 and asparagine 878.

It belongs to the peptidase M28 family. Zn(2+) is required as a cofactor.

The protein localises to the vacuole membrane. Functionally, may be involved in vacuolar sorting and osmoregulation. The sequence is that of Vacuolar membrane protease from Coccidioides posadasii (strain RMSCC 757 / Silveira) (Valley fever fungus).